The primary structure comprises 192 residues: Segregation and condensation protein B (192 aa).

The protein belongs to the ScpB family. Homodimer. Homodimerization may be required to stabilize the binding of ScpA to the Smc head domains. Component of a cohesin-like complex composed of ScpA, ScpB and the Smc homodimer, in which ScpA and ScpB bind to the head domain of Smc. The presence of the three proteins is required for the association of the complex with DNA.

It is found in the cytoplasm. Its function is as follows. Participates in chromosomal partition during cell division. May act via the formation of a condensin-like complex containing Smc and ScpA that pull DNA away from mid-cell into both cell halves. The chain is Segregation and condensation protein B from Oceanobacillus iheyensis (strain DSM 14371 / CIP 107618 / JCM 11309 / KCTC 3954 / HTE831).